The following is a 344-amino-acid chain: Ion-translocating oxidoreductase complex subunit D (344 aa).

The next 4 helical transmembrane spans lie at 23-43 (LVLG…GPGT), 44-64 (LLNL…MLAL), 77-99 (SALV…WLTL), and 120-140 (PFNP…LEMT). T172 bears the FMN phosphoryl threonine mark. The next 5 helical transmembrane spans lie at 198 to 218 (LGSA…LFLL), 222 to 242 (LFTW…SLLF), 252 to 272 (GSPL…FIVT), 285 to 305 (LVFG…GGYP), and 306 to 326 (DGVA…DYYT).

It belongs to the NqrB/RnfD family. As to quaternary structure, the complex is composed of six subunits: RnfA, RnfB, RnfC, RnfD, RnfE and RnfG. FMN is required as a cofactor.

It localises to the cell inner membrane. In terms of biological role, part of a membrane-bound complex that couples electron transfer with translocation of ions across the membrane. The sequence is that of Ion-translocating oxidoreductase complex subunit D from Pseudomonas aeruginosa (strain UCBPP-PA14).